We begin with the raw amino-acid sequence, 68 residues long: Large ribosomal subunit protein uL30 (68 aa).

Belongs to the universal ribosomal protein uL30 family. Part of the 50S ribosomal subunit.

The sequence is that of Large ribosomal subunit protein uL30 from Paenarthrobacter aurescens (strain TC1).